Reading from the N-terminus, the 273-residue chain is NH(3)-dependent NAD(+) synthetase (273 aa).

47–54 (GISGGQDS) contributes to the ATP binding site. Asp-53 contacts Mg(2+). Arg-139 contributes to the deamido-NAD(+) binding site. Thr-159 provides a ligand contact to ATP. Position 164 (Glu-164) interacts with Mg(2+). 2 residues coordinate deamido-NAD(+): Lys-172 and Asp-179. Lys-188 and Thr-210 together coordinate ATP. Residue 259–260 (HK) participates in deamido-NAD(+) binding.

It belongs to the NAD synthetase family. Homodimer.

The catalysed reaction is deamido-NAD(+) + NH4(+) + ATP = AMP + diphosphate + NAD(+) + H(+). The protein operates within cofactor biosynthesis; NAD(+) biosynthesis; NAD(+) from deamido-NAD(+) (ammonia route): step 1/1. In terms of biological role, catalyzes the ATP-dependent amidation of deamido-NAD to form NAD. Uses ammonia as a nitrogen source. The protein is NH(3)-dependent NAD(+) synthetase of Staphylococcus haemolyticus (strain JCSC1435).